The chain runs to 309 residues: ATP synthase gamma chain (309 aa).

This sequence belongs to the ATPase gamma chain family. F-type ATPases have 2 components, CF(1) - the catalytic core - and CF(0) - the membrane proton channel. CF(1) has five subunits: alpha(3), beta(3), gamma(1), delta(1), epsilon(1). CF(0) has three main subunits: a, b and c.

It localises to the cell membrane. Functionally, produces ATP from ADP in the presence of a proton gradient across the membrane. The gamma chain is believed to be important in regulating ATPase activity and the flow of protons through the CF(0) complex. The chain is ATP synthase gamma chain from Salinispora arenicola (strain CNS-205).